Consider the following 121-residue polypeptide: Large ribosomal subunit protein uL18 (121 aa).

Residues 63–88 are disordered; sequence AAIRPDPSPKKSQKQPPKTHKRYNLK. Residues 73–87 are compositionally biased toward basic residues; sequence KSQKQPPKTHKRYNL.

The protein belongs to the universal ribosomal protein uL18 family. As to quaternary structure, component of the large ribosomal subunit (LSU).

It is found in the cytoplasm. The protein resides in the nucleus. Component of the ribosome, a large ribonucleoprotein complex responsible for the synthesis of proteins in the cell. The small ribosomal subunit (SSU) binds messenger RNAs (mRNAs) and translates the encoded message by selecting cognate aminoacyl-transfer RNA (tRNA) molecules. The large subunit (LSU) contains the ribosomal catalytic site termed the peptidyl transferase center (PTC), which catalyzes the formation of peptide bonds, thereby polymerizing the amino acids delivered by tRNAs into a polypeptide chain. The nascent polypeptides leave the ribosome through a tunnel in the LSU and interact with protein factors that function in enzymatic processing, targeting, and the membrane insertion of nascent chains at the exit of the ribosomal tunnel. The protein is Large ribosomal subunit protein uL18 (RPL5) of Solanum melongena (Eggplant).